The chain runs to 652 residues: MPDRLVPATLARRDDGILVSPEYGELPRDASRARAHANRMLAGTGLLARWQGRRTFTIVETGFGTGGRFLATWAAWRDDPARCERLHFVAIEAHPFTREDLRRAVSHLVADTTISENADALIDAWPMHVPGLHRLEFDAGRVVLTLAFGDARDMLQRLVARADAFYLGNVASAAHGDVLSADVIRALARIAADGATYATHSHDDTVKHALEQTGFTSRDVEDCAGEPALRVGEYAPRWRMRRHEPPRALPVAAREAIVIGAGLAGCAVVERLAARGWNITLIERHERIASEASGNPAGVFHPLMTRDDNVASRLTRSGFLHALARWRALEDAGHAFARSTRGMIHLAESADDFARMRDAFDALGAPSDYVSLLDTDAARAHLNLPVAHGGLLFPHGGAVWPAGVCAAQIAAAGERVTLLAGTEVARLERDRDIWRAVDAAGATLAEAPVVVLANAGDAVRLAGLRHVALQPVRGQLTLLPPGSTAPLPCPTIGDGYAVPLDDGTLLIGATFEPDDVDRTMRTVGHIENLARVRHLLPGLIGELPDVDTLRGRVAFRWVVADRVPVIGPLADEAQAVANARALSGAKARDLPRTAGLYGAFGYGSRGLVWAALGAELIASQLEGEPLPLERELVDAVDPARFLIRALRGRQIG.

The segment at 1–235 (MPDRLVPATL…EPALRVGEYA (235 aa)) is tRNA (mnm(5)s(2)U34)-methyltransferase. Residues 259–652 (IGAGLAGCAV…IRALRGRQIG (394 aa)) are FAD-dependent cmnm(5)s(2)U34 oxidoreductase.

The protein in the N-terminal section; belongs to the methyltransferase superfamily. tRNA (mnm(5)s(2)U34)-methyltransferase family. In the C-terminal section; belongs to the DAO family. FAD is required as a cofactor.

The protein resides in the cytoplasm. It carries out the reaction 5-aminomethyl-2-thiouridine(34) in tRNA + S-adenosyl-L-methionine = 5-methylaminomethyl-2-thiouridine(34) in tRNA + S-adenosyl-L-homocysteine + H(+). In terms of biological role, catalyzes the last two steps in the biosynthesis of 5-methylaminomethyl-2-thiouridine (mnm(5)s(2)U) at the wobble position (U34) in tRNA. Catalyzes the FAD-dependent demodification of cmnm(5)s(2)U34 to nm(5)s(2)U34, followed by the transfer of a methyl group from S-adenosyl-L-methionine to nm(5)s(2)U34, to form mnm(5)s(2)U34. This Burkholderia ambifaria (strain ATCC BAA-244 / DSM 16087 / CCUG 44356 / LMG 19182 / AMMD) (Burkholderia cepacia (strain AMMD)) protein is tRNA 5-methylaminomethyl-2-thiouridine biosynthesis bifunctional protein MnmC.